The primary structure comprises 312 residues: Protein-methionine-sulfoxide reductase catalytic subunit MsrP (312 aa).

The segment at residues 1-47 (MLIRRPPDLLPSEITPEPLARGRRALLKGLGAGAALAGLGLPQISQA) is a signal peptide (tat-type signal). Mo-molybdopterin is bound by residues Asn-74, 77–78 (YE), Cys-133, Thr-168, Asn-216, Arg-221, and 232–234 (SAK).

This sequence belongs to the MsrP family. As to quaternary structure, heterodimer of a catalytic subunit (MsrP) and a heme-binding subunit (MsrQ). It depends on Mo-molybdopterin as a cofactor. Predicted to be exported by the Tat system. The position of the signal peptide cleavage has not been experimentally proven.

Its subcellular location is the periplasm. The catalysed reaction is L-methionyl-[protein] + a quinone + H2O = L-methionyl-(R)-S-oxide-[protein] + a quinol. In terms of biological role, part of the MsrPQ system that repairs oxidized periplasmic proteins containing methionine sulfoxide residues (Met-O), using respiratory chain electrons. Thus protects these proteins from oxidative-stress damage caused by reactive species of oxygen and chlorine generated by the host defense mechanisms. MsrPQ is essential for the maintenance of envelope integrity under bleach stress, rescuing a wide series of structurally unrelated periplasmic proteins from methionine oxidation. The catalytic subunit MsrP is non-stereospecific, being able to reduce both (R-) and (S-) diastereoisomers of methionine sulfoxide. Involved in protection against reactive chlorine species (RCS) generated by chlorite and hypochlorite. This is Protein-methionine-sulfoxide reductase catalytic subunit MsrP from Azospira oryzae (strain ATCC BAA-33 / DSM 13638 / PS) (Dechlorosoma suillum).